The chain runs to 217 residues: Aprataxin-like protein (217 aa).

One can recognise an HIT domain in the interval 6 to 139 (ALKNYVTSPE…HIHVISKDFH (134 aa)). Interaction with DNA stretches follow at residues 34–38 (DSFPK), 121–132 (HSVPSMANLHIH), and 144–148 (KNKKH). Residue His130 is the Nucleophile of the active site. Zn(2+) contacts are provided by Cys188, Cys191, His205, and Glu209.

It is found in the nucleus. It localises to the cytoplasm. It carries out the reaction a 5'-end adenosine-5'-diphospho-5'-2'-deoxyribonucleoside-DNA + H2O = a 5'-end 5'-phospho-2'-deoxyribonucleoside-DNA + AMP + 2 H(+). The catalysed reaction is a 5'-end adenosine-5'-diphospho-5'-ribonucleoside-2'-deoxyribonucleotide-DNA + H2O = a 5'-end 5'-phospho-ribonucleoside-2'-deoxyribonucleotide-DNA + AMP + 2 H(+). It catalyses the reaction a 3'-end 2'-deoxyribonucleotide-3'-diphospho-5'-guanosine-DNA + H2O = a 3'-end 2'-deoxyribonucleotide 3'-phosphate-DNA + GMP + 2 H(+). In terms of biological role, DNA-binding protein involved in single-strand DNA break repair, double-strand DNA break repair and base excision repair. Resolves abortive DNA ligation intermediates formed either at base excision sites, or when DNA ligases attempt to repair non-ligatable breaks induced by reactive oxygen species. Catalyzes the release of adenylate groups covalently linked to 5'-phosphate termini, resulting in the production of 5'-phosphate termini that can be efficiently rejoined. Likewise, catalyzes the release of 3'-linked guanosine (DNAppG) and inosine (DNAppI) from DNA, but has higher specific activity with 5'-linked adenosine (AppDNA). This Saccharomyces cerevisiae (strain ATCC 204508 / S288c) (Baker's yeast) protein is Aprataxin-like protein (HNT3).